The following is a 698-amino-acid chain: Elongation factor G (698 aa).

The tr-type G domain occupies Glu-8 to Asn-290. Residues Ala-17–Thr-24, Asp-88–His-92, and Asn-142–Asp-145 contribute to the GTP site.

The protein belongs to the TRAFAC class translation factor GTPase superfamily. Classic translation factor GTPase family. EF-G/EF-2 subfamily.

The protein localises to the cytoplasm. Catalyzes the GTP-dependent ribosomal translocation step during translation elongation. During this step, the ribosome changes from the pre-translocational (PRE) to the post-translocational (POST) state as the newly formed A-site-bound peptidyl-tRNA and P-site-bound deacylated tRNA move to the P and E sites, respectively. Catalyzes the coordinated movement of the two tRNA molecules, the mRNA and conformational changes in the ribosome. The chain is Elongation factor G from Halorhodospira halophila (strain DSM 244 / SL1) (Ectothiorhodospira halophila (strain DSM 244 / SL1)).